A 721-amino-acid polypeptide reads, in one-letter code: Zinc-transporting ATPase (721 aa).

Over 1–107 (MTQSSPLKTQ…HSHGAGEFNL (107 aa)) the chain is Cytoplasmic. The HMA domain occupies 8–74 (KTQQMQVGGM…RIAALGYTLA (67 aa)). Zn(2+) contacts are provided by cysteine 19 and cysteine 22. Residues 80–101 (VTLNGHKHPHSHREEGHSHSHG) are disordered. A helical membrane pass occupies residues 108–128 (KQELLPVLTAIALFTIAILFE). Residues 129–140 (QPLHNTPGQIAE) lie on the Extracellular side of the membrane. Residues 141-160 (FAVIIPAYLLSGWTVLKTAG) form a helical membrane-spanning segment. Residues 161–167 (RNILRGQ) are Cytoplasmic-facing. A helical transmembrane segment spans residues 168–187 (IFDENFLMTIATLGALAIHQ). Residues 188–190 (LPE) lie on the Extracellular side of the membrane. The helical transmembrane segment at 191–210 (AVAVMLFFRVGELFQEYSVG) threads the bilayer. At 211–344 (RSRRSIKALL…ITQFARYYTP (134 aa)) the chain is on the cytoplasmic side. The helical transmembrane segment at 345–363 (VIVFLSLAVALLPPLFIPG) threads the bilayer. Residues 364–369 (ADRADW) lie on the Extracellular side of the membrane. The helical transmembrane segment at 370 to 387 (VYRALVLLVISCPCGLVI) threads the bilayer. Topologically, residues 388–671 (SIPLGYFGGI…AIHVARKTRQ (284 aa)) are cytoplasmic. Aspartate 425 acts as the 4-aspartylphosphate intermediate in catalysis. Residues aspartate 618 and aspartate 622 each contribute to the Mg(2+) site. Residues 672-693 (IVVQNIVLALGIKALFIALGTI) traverse the membrane as a helical segment. Residues 694–701 (GLATLWEA) are Extracellular-facing. A helical transmembrane segment spans residues 702-717 (VFADVGVALLAILNAT). Topologically, residues 718-721 (RIAK) are cytoplasmic.

This sequence belongs to the cation transport ATPase (P-type) (TC 3.A.3) family. Type IB subfamily.

It is found in the cell membrane. It catalyses the reaction Zn(2+)(in) + ATP + H2O = Zn(2+)(out) + ADP + phosphate + H(+). This chain is Zinc-transporting ATPase (ziaA), found in Synechocystis sp. (strain ATCC 27184 / PCC 6803 / Kazusa).